The following is a 61-amino-acid chain: Small ribosomal subunit protein uS14 (61 aa).

Residues cysteine 24, cysteine 27, cysteine 40, and cysteine 43 each contribute to the Zn(2+) site.

Belongs to the universal ribosomal protein uS14 family. Zinc-binding uS14 subfamily. Part of the 30S ribosomal subunit. Contacts proteins S3 and S10. It depends on Zn(2+) as a cofactor.

Binds 16S rRNA, required for the assembly of 30S particles and may also be responsible for determining the conformation of the 16S rRNA at the A site. The chain is Small ribosomal subunit protein uS14 from Trichlorobacter lovleyi (strain ATCC BAA-1151 / DSM 17278 / SZ) (Geobacter lovleyi).